The following is a 4582-amino-acid chain: Probable transcription-associated protein 1 (4582 aa).

Pro residues predominate over residues 1 to 11; the sequence is MSTNPPQPPPS. Disordered regions lie at residues 1–52, 219–276, 556–581, 794–821, 1152–1195, 1483–1570, 2341–2410, 2537–2567, 2637–2662, and 2741–2789; these read MSTN…SSGN, TTTA…TTTT, KEKE…ANTT, VGGS…TNSN, ENEN…NNNI, QSTT…STIN, SIKT…NIDD, TTTT…QVTK, SDGG…GGAS, and SPST…TTTE. The segment covering 25-37 has biased composition (polar residues); the sequence is PMSTTNPSQPTIT. Low complexity-rich tracts occupy residues 38 to 50, 219 to 250, and 258 to 276; these read SSSA…SSSS, TTTA…NTIT, and PSTT…TTTT. The span at 556–573 shows a compositional bias: basic and acidic residues; it reads KEKEKELKDPQSLKDKLD. Positions 794–811 are enriched in gly residues; the sequence is VGGSGGSNSSGGGGGGGS. Low complexity-rich tracts occupy residues 812–821, 1158–1194, 1484–1504, 1515–1568, and 2341–2367; these read NSSNNSTNSN, DNNN…NNNN, STTT…ETAT, TEPT…SSST, and SIKT…DSSS. The span at 2378–2398 shows a compositional bias: polar residues; that stretch reads SITTPSQGGVATPNVSDSTPT. Low complexity-rich tracts occupy residues 2537–2556 and 2650–2662; these read TTTT…DSSS and SSSG…GGAS. Positions 2944 to 2991 form a coiled coil; the sequence is NDINQQQQQQQQQQQQQQQQQQQQQQQQQQQQQQQQQQQQQQHHQQEQ. Residues 3185–3815 enclose the FAT domain; that stretch reads VISFLGENYN…YYHFRKLVLE (631 aa). 2 stretches are compositionally biased toward low complexity: residues 3491 to 3509 and 3824 to 3916; these read TNTT…TTTT and TTSP…ANTT. Disordered regions lie at residues 3491–3517 and 3821–3928; these read TNTT…PQQP and SKFT…FSPL. A PI3K/PI4K catalytic domain is found at 4171–4541; that stretch reads VCPRITLYGG…MLENRIDSLT (371 aa). The segment at 4177 to 4183 is G-loop; the sequence is LYGGNGK. The tract at residues 4312-4337 is disordered; that stretch reads NITEDNNISSSSSSSSSSGSNSGENS. Over residues 4320–4337 the composition is skewed to low complexity; that stretch reads SSSSSSSSSSGSNSGENS. The tract at residues 4400–4408 is catalytic loop; that stretch reads DIGDIDPSK. The interval 4429–4451 is activation loop; it reads NRKLGFDLLQDNPYNQQQLLRLS. The FATC domain occupies 4538-4582; that stretch reads DSLTPSSQPDKTCFISPIVKKVNQLIQNSLSSNISQLDQLSCPWL.

Belongs to the PI3/PI4-kinase family. TRA1 subfamily.

The chain is Probable transcription-associated protein 1 (tra1) from Dictyostelium discoideum (Social amoeba).